The sequence spans 374 residues: Flap endonuclease 1 (374 aa).

The interval M1–R105 is N-domain. A Mg(2+)-binding site is contributed by D34. Positions 47 and 71 each coordinate DNA. Position 87 (D87) interacts with Mg(2+). The interval G103–E122 is disordered. An I-domain region spans residues K123–H254. Residues E159, E161, D180, and D182 each contribute to the Mg(2+) site. Position 159 (E159) interacts with DNA. Residues G232 and D234 each coordinate DNA. Residue D234 participates in Mg(2+) binding. The interval S335–K374 is disordered. The segment at Q340–F348 is interaction with PCNA.

Belongs to the XPG/RAD2 endonuclease family. FEN1 subfamily. As to quaternary structure, interacts with PCNA. Three molecules of FEN1 bind to one PCNA trimer with each molecule binding to one PCNA monomer. PCNA stimulates the nuclease activity without altering cleavage specificity. The cofactor is Mg(2+). Phosphorylated. Phosphorylation upon DNA damage induces relocalization to the nuclear plasma.

Its subcellular location is the nucleus. It localises to the nucleolus. It is found in the nucleoplasm. The protein resides in the mitochondrion. Its function is as follows. Structure-specific nuclease with 5'-flap endonuclease and 5'-3' exonuclease activities involved in DNA replication and repair. During DNA replication, cleaves the 5'-overhanging flap structure that is generated by displacement synthesis when DNA polymerase encounters the 5'-end of a downstream Okazaki fragment. It enters the flap from the 5'-end and then tracks to cleave the flap base, leaving a nick for ligation. Also involved in the long patch base excision repair (LP-BER) pathway, by cleaving within the apurinic/apyrimidinic (AP) site-terminated flap. Acts as a genome stabilization factor that prevents flaps from equilibrating into structures that lead to duplications and deletions. Also possesses 5'-3' exonuclease activity on nicked or gapped double-stranded DNA, and exhibits RNase H activity. Also involved in replication and repair of rDNA and in repairing mitochondrial DNA. The polypeptide is Flap endonuclease 1 (Mycosarcoma maydis (Corn smut fungus)).